The sequence spans 206 residues: RILP-like protein 2 (206 aa).

Residues 1-29 form a disordered region; that stretch reads MEEPPLREEEEEEEEDEAGPEGALGKSPL. Residues 8–19 are compositionally biased toward acidic residues; sequence EEEEEEEEDEAG. An RH1 domain is found at 19–108; the sequence is GPEGALGKSP…RREGSAAGPE (90 aa). A coiled-coil region spans residues 67 to 159; that stretch reads LEMLETLVNE…VQEELQCYKS (93 aa). An RH2 domain is found at 125 to 197; the sequence is RPRFTLQELR…KEEKTIIRKL (73 aa). The interval 161–189 is disordered; it reads LIPPREGPGGRREKEALFPRGSNANSNKE. The segment covering 168 to 177 has biased composition (basic and acidic residues); it reads PGGRREKEAL.

The protein belongs to the RILPL family. As to quaternary structure, homodimer. Interacts with RAC1. Interacts (via N-terminus) with MYO5A, the interaction is required for its role in dendrite formation. Interacts with RAB8A; interaction is dependent on the phosphorylation of RAB8A on 'Thr-72'. Interacts with RAB10 and RAB12; interaction is dependent on the phosphorylation of 'Thr-73' on RAB10 and 'Ser-105' on RAB12.

It is found in the cytoplasm. It localises to the cytosol. The protein resides in the cytoskeleton. Its subcellular location is the microtubule organizing center. The protein localises to the centrosome. It is found in the cell projection. It localises to the cilium. Functionally, involved in cell shape and neuronal morphogenesis, positively regulating the establishment and maintenance of dendritic spines. Plays a role in cellular protein transport, including protein transport away from primary cilia. May function via activation of RAC1 and PAK1. This is RILP-like protein 2 (RILPL2) from Bos taurus (Bovine).